Here is a 625-residue protein sequence, read N- to C-terminus: tRNA uridine 5-carboxymethylaminomethyl modification enzyme MnmG (625 aa).

14–19 (GAGHAG) contacts FAD. 273-287 (GPRYCPSIEDKIVRF) is a binding site for NAD(+).

It belongs to the MnmG family. Homodimer. Heterotetramer of two MnmE and two MnmG subunits. Requires FAD as cofactor.

It localises to the cytoplasm. NAD-binding protein involved in the addition of a carboxymethylaminomethyl (cmnm) group at the wobble position (U34) of certain tRNAs, forming tRNA-cmnm(5)s(2)U34. The chain is tRNA uridine 5-carboxymethylaminomethyl modification enzyme MnmG from Clostridium botulinum (strain Okra / Type B1).